A 601-amino-acid polypeptide reads, in one-letter code: Elongation factor 4 (601 aa).

Residues 7-189 (SNIRNFSIVA…AIVHRLPPPQ (183 aa)) form the tr-type G domain. GTP-binding positions include 19–24 (DHGKST) and 136–139 (NKVD).

The protein belongs to the TRAFAC class translation factor GTPase superfamily. Classic translation factor GTPase family. LepA subfamily.

The protein localises to the cell inner membrane. The enzyme catalyses GTP + H2O = GDP + phosphate + H(+). In terms of biological role, required for accurate and efficient protein synthesis under certain stress conditions. May act as a fidelity factor of the translation reaction, by catalyzing a one-codon backward translocation of tRNAs on improperly translocated ribosomes. Back-translocation proceeds from a post-translocation (POST) complex to a pre-translocation (PRE) complex, thus giving elongation factor G a second chance to translocate the tRNAs correctly. Binds to ribosomes in a GTP-dependent manner. The protein is Elongation factor 4 of Rhodopseudomonas palustris (strain BisB18).